The sequence spans 510 residues: Hydroperoxide bicyclase CYP5164A3, mitochondrial (510 aa).

A mitochondrion-targeting transit peptide spans M1–R31. C452 is a binding site for heme.

Belongs to the cytochrome P450 family. Heme serves as cofactor.

Its subcellular location is the mitochondrion. The enzyme catalyses (13S)-hydroperoxy-(9Z,11E,15Z)-octadecatrienoate = plasmodiophorol A. It carries out the reaction (13S)-hydroperoxy-(9Z,11E,15Z)-octadecatrienoate = plasmodiophorol B. It catalyses the reaction (13S)-hydroperoxy-(9Z,11E,15Z)-octadecatrienoate = ectocarpin A + H2O. The catalysed reaction is (15S)-hydroperoxy-(5Z,8Z,11Z,13E,17Z)-eicosapentaenoate = ectocarpin B + H2O. The enzyme catalyses (15S)-hydroperoxy-(5Z,8Z,11Z,13E,17Z)-eicosapentaenoate = ectocarpin C. It carries out the reaction (15S)-hydroperoxy-(5Z,8Z,11Z,13E,17Z)-eicosapentaenoate + H2O = ectocarpin D. It catalyses the reaction (15S)-hydroperoxy-(5Z,8Z,11Z,13E,17Z)-eicosapentaenoate = 14-oxo-15-hydroxy-(5Z,8Z,11Z,17Z)-eicosatetraenoate. It functions in the pathway lipid metabolism; oxylipin biosynthesis. In terms of biological role, cytochrome P450 hydroperoxide bicyclase involved in the metabolism of oxylipins 'ectocarpins' natural products, such as hybridalactone, ecklonilactones and derivatives. Isomerizes the hydroperoxides into epoxyalcohols via epoxyallylic radical. Can use alpha-linolenic acid 13(S)-hydroperoxide (13-HPOTE) and eicosapentaenoic acid 15(S)-hydroperoxide (15-HPEPE) as preferred substrate to produce corresponding heterobicyclic oxylipins, such as plasmodiophorol A (6-oxabicyclo[3.1.0]hexane), plasmodiophorol B (2-oxabicyclo[2.2.1]heptane) and plasmodiophorol C (4-hydroxymethyl-1,2-dihydroxycyclopentane) as well as ectocarpin A (3-propenyl-6-oxabicyclo[3.1.0]hexane) formed at about 15:3:3:1 ratio for 13-HPOTE, and analogous to plasmodiophorols A and B including ectocarpin B (3-[(1'E)-propenyl]-6-oxabicyclo[3.1.0]hexane), ectocarpin C, 14-oxo-15-hydroxy-5,8,11,17-eicosate-traenoic acid and ectocarpin D for 15-HPEPE. Barely able to use linoleic acid 13-hydroperoxide (13-HPODE), linoleic acid 9-hydroperoxide (9-HPODE), eicosapentaenoic acid 15-hydroperoxide (15-HPEPE), and alpha-linolenic acid 9-hydroperoxide (9-HPOTE) as substrates. This Ectocarpus siliculosus (Brown alga) protein is Hydroperoxide bicyclase CYP5164A3, mitochondrial.